The sequence spans 434 residues: Glutamate-1-semialdehyde 2,1-aminomutase 1 (434 aa).

An N6-(pyridoxal phosphate)lysine modification is found at Lys270.

Belongs to the class-III pyridoxal-phosphate-dependent aminotransferase family. HemL subfamily. In terms of assembly, homodimer. Pyridoxal 5'-phosphate serves as cofactor.

Its subcellular location is the cytoplasm. The enzyme catalyses (S)-4-amino-5-oxopentanoate = 5-aminolevulinate. It functions in the pathway porphyrin-containing compound metabolism; protoporphyrin-IX biosynthesis; 5-aminolevulinate from L-glutamyl-tRNA(Glu): step 2/2. The protein is Glutamate-1-semialdehyde 2,1-aminomutase 1 of Bacillus cereus (strain AH187).